The primary structure comprises 219 residues: tRNA (guanine-N(7)-)-methyltransferase (219 aa).

S-adenosyl-L-methionine contacts are provided by Glu44, Asp69, Glu102, and Asn125. Positions 129 and 161 each coordinate substrate.

It belongs to the class I-like SAM-binding methyltransferase superfamily. TrmB family.

It catalyses the reaction guanosine(46) in tRNA + S-adenosyl-L-methionine = N(7)-methylguanosine(46) in tRNA + S-adenosyl-L-homocysteine. The protein operates within tRNA modification; N(7)-methylguanine-tRNA biosynthesis. Its function is as follows. Catalyzes the formation of N(7)-methylguanine at position 46 (m7G46) in tRNA. The polypeptide is tRNA (guanine-N(7)-)-methyltransferase (Clostridium perfringens (strain 13 / Type A)).